A 901-amino-acid chain; its full sequence is Protein translocase subunit SecA (901 aa).

ATP-binding positions include glutamine 87, 105 to 109 (GEGKT), and aspartate 512. The segment at 859 to 901 (HQDDDSAAAAALAAQTGERKVGRNDPCPCGSGKKYKQCHGRLQ) is disordered. Zn(2+) is bound by residues cysteine 885, cysteine 887, cysteine 896, and histidine 897. Over residues 891 to 901 (KKYKQCHGRLQ) the composition is skewed to basic residues.

Belongs to the SecA family. In terms of assembly, monomer and homodimer. Part of the essential Sec protein translocation apparatus which comprises SecA, SecYEG and auxiliary proteins SecDF-YajC and YidC. Zn(2+) is required as a cofactor.

The protein resides in the cell inner membrane. It localises to the cytoplasm. It carries out the reaction ATP + H2O + cellular proteinSide 1 = ADP + phosphate + cellular proteinSide 2.. Part of the Sec protein translocase complex. Interacts with the SecYEG preprotein conducting channel. Has a central role in coupling the hydrolysis of ATP to the transfer of proteins into and across the cell membrane, serving both as a receptor for the preprotein-SecB complex and as an ATP-driven molecular motor driving the stepwise translocation of polypeptide chains across the membrane. This Escherichia coli O9:H4 (strain HS) protein is Protein translocase subunit SecA.